Here is a 478-residue protein sequence, read N- to C-terminus: 2,5-dioxopentanoate dehydrogenase (478 aa).

Residues Trp-148 to Asn-149, Lys-172 to Thr-175, and Gly-225 to Ser-226 each bind NADP(+). The active-site Proton acceptor is Glu-249. Cys-283 (nucleophile) is an active-site residue. Glu-379 is a binding site for NADP(+).

It belongs to the aldehyde dehydrogenase family. Homotetramer.

It catalyses the reaction 2,5-dioxopentanoate + NADP(+) + H2O = 2-oxoglutarate + NADPH + 2 H(+). Its function is as follows. 2,5-dioxopentanoate dehydrogenase involved in the degradation of pentoses such as D-arabinose or D-xylose, a major component of hemicelluloses such as xylan. Catalyzes the fifth reaction in the pentose utilization pathway through dehydratation of 2,5-dioxopentanoate into 2-oxoglutarate. Also shows dehydrogenase activity toward glycolaldehyde and DL-glyceraldehyde. In Saccharolobus solfataricus (strain ATCC 35092 / DSM 1617 / JCM 11322 / P2) (Sulfolobus solfataricus), this protein is 2,5-dioxopentanoate dehydrogenase.